A 425-amino-acid chain; its full sequence is Stabilizer of axonemal microtubules 4 (425 aa).

Disordered stretches follow at residues 259-297 (RGSD…YQPP) and 315-335 (NKEP…SYEQ). A compositionally biased stretch (basic and acidic residues) spans 260–272 (GSDRDTGYSRVSE). The segment covering 277-290 (PRMPTPSSQPTSMS) has biased composition (low complexity). Residues 321-332 (FTLNNPSYVRSS) show a composition bias toward polar residues.

As to quaternary structure, microtubule inner protein component of sperm flagellar doublet microtubules. Interacts with PPP1CA. As to expression, expressed in brain, ovaries and testis. Expressed in the tracheal epithelium and in secondary spermatocytes and spermatids present in the seminiferous tubule. Expressed in ependymal cells lining the ventricular walls of the brain.

The protein resides in the cell projection. The protein localises to the cilium. Its subcellular location is the cytoplasm. It localises to the cytoskeleton. It is found in the flagellum axoneme. The polypeptide is Stabilizer of axonemal microtubules 4 (Rattus norvegicus (Rat)).